We begin with the raw amino-acid sequence, 259 residues long: Cobalt transport protein CbiM (259 aa).

Positions 1 to 25 are cleaved as a signal peptide; that stretch reads MFRRTTWLTLYLLLAMAALARPAFA. The next 6 helical transmembrane spans lie at 31–51, 68–88, 100–120, 132–152, 160–180, and 206–226; these read GFLP…FWIW, MLLG…LPSV, LGAV…VLLF, TLGA…YGLY, GSMP…TYVT, and IFAV…VIVF.

It belongs to the CbiM family. As to quaternary structure, forms an energy-coupling factor (ECF) transporter complex composed of an ATP-binding protein (A component, CbiO), a transmembrane protein (T component, CbiQ) and 2 possible substrate-capture proteins (S components, CbiM and CbiN) of unknown stoichimetry.

The protein resides in the cell membrane. It participates in cofactor biosynthesis; adenosylcobalamin biosynthesis. Part of the energy-coupling factor (ECF) transporter complex CbiMNOQ involved in cobalt import. The chain is Cobalt transport protein CbiM from Moorella thermoacetica (strain ATCC 39073 / JCM 9320).